The sequence spans 1162 residues: Transcription termination factor 2 (1162 aa).

Residues cysteine 6, histidine 9, cysteine 32, and cysteine 37 each contribute to the Zn(2+) site. The GRF-type zinc finger occupies 6 to 46; the sequence is CPEHGTFCFLKTGVRDGPNKGKSFYVCRADTCSFVRATDIP. 4 disordered regions span residues 97–116, 142–358, 388–407, and 459–503; these read PDSK…ETFH, IKGE…EEDD, DRSV…KVEP, and LSPE…TQPV. Residues 105-116 are compositionally biased toward polar residues; that stretch reads SNKSQHASETFH. Over residues 142-178 the composition is skewed to basic and acidic residues; the sequence is IKGEGEEKKADKKQREKGDQLFDQKKEQKPEMMEKDL. Lysine 143 is covalently cross-linked (Glycyl lysine isopeptide (Lys-Gly) (interchain with G-Cter in SUMO2)). The span at 219–232 shows a compositional bias: polar residues; that stretch reads IKSQQCQGNELTRP. The span at 233 to 245 shows a compositional bias: low complexity; it reads SASSQEKSSGKSQ. Positions 246 to 258 are enriched in basic and acidic residues; it reads DVQRESEPLREKV. Polar residues predominate over residues 261–274; that stretch reads LLPQNVHSHNSISK. Low complexity predominate over residues 323–338; it reads PAPGGPAAQAAPAAPG. Polar residues predominate over residues 459 to 485; sequence LSPEQGTNEKSNSQVPQQSHFTKTTTG. Position 460 is a phosphoserine (serine 460). The region spanning 583–786 is the Helicase ATP-binding domain; that stretch reads WRESQKPQGG…YSLLKFLRCS (204 aa). 596 to 603 provides a ligand contact to ATP; sequence DDMGLGKT. A DEAH box motif is present at residues 737-740; the sequence is DEAH. Residues 871–890 are disordered; it reads KRHESRGNQSGRSPNNPFSR. A compositionally biased stretch (polar residues) spans 877–888; it reads GNQSGRSPNNPF. 2 positions are modified to phosphoserine: serine 883 and serine 908. One can recognise a Helicase C-terminal domain in the interval 995–1157; sequence SLLAELEAIQ…VTKLTLADLR (163 aa).

Belongs to the SNF2/RAD54 helicase family. In terms of assembly, interacts with CDC5L. Part of the spliceosome.

The protein localises to the cytoplasm. Its subcellular location is the nucleus. Its function is as follows. DsDNA-dependent ATPase which acts as a transcription termination factor by coupling ATP hydrolysis with removal of RNA polymerase II from the DNA template. May contribute to mitotic transcription repression. May also be involved in pre-mRNA splicing. This is Transcription termination factor 2 (TTF2) from Homo sapiens (Human).